The chain runs to 520 residues: Ribonuclease Y (520 aa).

A helical transmembrane segment spans residues 5–25 (ITIISSLLFLIVGLVVGSLIF). A disordered region spans residues 76 to 127 (ELRGRRTETQKAENRLLQREENLDRKDTSLSKREATLERKEESISKRQQQIE). In terms of domain architecture, KH spans 210–273 (TVSVVTLPND…EIARIALEKL (64 aa)). Positions 336 to 429 (VLNHSLEVSK…VAAADALSAA (94 aa)) constitute an HD domain.

It belongs to the RNase Y family.

It localises to the cell membrane. In terms of biological role, endoribonuclease that initiates mRNA decay. The chain is Ribonuclease Y from Listeria monocytogenes serotype 1/2a (strain 10403S).